We begin with the raw amino-acid sequence, 87 residues long: Large ribosomal subunit protein eL31 (87 aa).

It belongs to the eukaryotic ribosomal protein eL31 family.

This chain is Large ribosomal subunit protein eL31, found in Methanoculleus marisnigri (strain ATCC 35101 / DSM 1498 / JR1).